A 190-amino-acid chain; its full sequence is Potassium-transporting ATPase KdpC subunit (190 aa).

A helical transmembrane segment spans residues 10–30; it reads TFIFLLLITGGVYPLLTTALG.

It belongs to the KdpC family. The system is composed of three essential subunits: KdpA, KdpB and KdpC.

It localises to the cell inner membrane. Its function is as follows. Part of the high-affinity ATP-driven potassium transport (or Kdp) system, which catalyzes the hydrolysis of ATP coupled with the electrogenic transport of potassium into the cytoplasm. This subunit acts as a catalytic chaperone that increases the ATP-binding affinity of the ATP-hydrolyzing subunit KdpB by the formation of a transient KdpB/KdpC/ATP ternary complex. In Escherichia coli O9:H4 (strain HS), this protein is Potassium-transporting ATPase KdpC subunit.